Reading from the N-terminus, the 653-residue chain is Sodium-dependent phosphate transporter 2 (653 aa).

The Extracellular portion of the chain corresponds to 1 to 5; it reads MAIDG. A helical transmembrane segment spans residues 6–26; sequence YLWMVILGFIIAFILAFSVGA. The Cytoplasmic segment spans residues 27-46; the sequence is NDVANSFGTAVGSGVVTLRQ. Residues 47–67 form a helical membrane-spanning segment; that stretch reads ACILASIFETTGSVLLGAKVG. At 68 to 86 the chain is on the extracellular side; the sequence is ETIRKGIIDVNLYNETVET. Asn81 carries an N-linked (GlcNAc...) asparagine glycan. A helical transmembrane segment spans residues 87 to 107; sequence LMAGEVSAMVGSAVWQLIASF. The Cytoplasmic portion of the chain corresponds to 108–109; sequence LR. A helical membrane pass occupies residues 110–130; sequence LPISGTHCIVGSTIGFSLVAI. Topologically, residues 131–142 are extracellular; sequence GTQGVQWMELVK. Residues 143-163 form a helical membrane-spanning segment; that stretch reads IVASWFISPLLSGFMSGVLFI. The Cytoplasmic portion of the chain corresponds to 164 to 190; sequence LIRIFILKKEDPVPNGLRALPVFYAAT. Residues 191–211 form a helical membrane-spanning segment; it reads IAINVFSIMYTGAPVLGLVLP. The Extracellular portion of the chain corresponds to 212-213; sequence IW. Residues 214-234 traverse the membrane as a helical segment; sequence AIALISFGVALLFALFVWLFV. Over 235 to 483 the chain is Cytoplasmic; that stretch reads CPWMRRKIAG…EEKEEKDTAE (249 aa). Phosphoserine is present on residues Ser253, Ser256, Ser259, and Ser268. A disordered region spans residues 275–311; that stretch reads PGAKANDDSTVPLTGSAGEPSGTSEGTSVGNHPRASY. Over residues 295–304 the composition is skewed to polar residues; that stretch reads SGTSEGTSVG. Phosphoserine occurs at positions 316 and 385. Residues 459–478 form a disordered region; sequence SELTDPDQPRDDPAEEEKEE. Residues 484–504 form a helical membrane-spanning segment; sequence VHLLFHFLQVLTACFGSFAHG. Over 505-531 the chain is Extracellular; sequence GNDVSNAIGPLVALWLIYEQGAVLQEA. A helical transmembrane segment spans residues 532-552; sequence VTPVWLLFYGGVGICTGLWVW. Over 553 to 572 the chain is Cytoplasmic; sequence GRRVIQTMGKDLTPITPSSG. The chain crosses the membrane as a helical span at residues 573 to 587; sequence FTIELASAFTVVIAS. The Extracellular segment spans residues 588–594; it reads NVGLPVS. A helical transmembrane segment spans residues 595-610; that stretch reads TTHCKVGSVVAVGWIR. The Cytoplasmic portion of the chain corresponds to 611–622; sequence SRKAVDWRLFRN. A helical membrane pass occupies residues 623 to 643; the sequence is IFVAWFVTVPVAGLFSAAIMA. The Extracellular segment spans residues 644 to 653; the sequence is LLMYGILPYV.

Belongs to the inorganic phosphate transporter (PiT) (TC 2.A.20) family. Homodimer.

The protein localises to the cell membrane. It localises to the apical cell membrane. The catalysed reaction is 2 Na(+)(out) + phosphate(out) = 2 Na(+)(in) + phosphate(in). Functionally, sodium-phosphate symporter which preferentially transports the monovalent form of phosphate with a stoichiometry of two sodium ions per phosphate ion. Plays a critical role in the determination of bone quality and strength by providing phosphate for bone mineralization. Required to maintain normal cerebrospinal fluid phosphate levels. Mediates phosphate-induced calcification of vascular smooth muscle cells (VCMCs) and can functionally compensate for loss of SLC20A1 in VCMCs. In terms of biological role, (Microbial infection) Functions as a retroviral receptor for feline leukemia virus subgroup B (FeLV-B). The polypeptide is Sodium-dependent phosphate transporter 2 (SLC20A2) (Felis catus (Cat)).